Consider the following 499-residue polypeptide: Glycerol kinase (499 aa).

An ADP-binding site is contributed by T13. Residues T13, T14, and S15 each coordinate ATP. Residue T13 participates in sn-glycerol 3-phosphate binding. Position 17 (R17) interacts with ADP. Sn-glycerol 3-phosphate contacts are provided by R83, E84, Y135, and D244. Positions 83, 84, 135, 244, and 245 each coordinate glycerol. Positions 266 and 309 each coordinate ADP. 4 residues coordinate ATP: T266, G309, Q313, and G410. 2 residues coordinate ADP: G410 and N414.

It belongs to the FGGY kinase family.

It catalyses the reaction glycerol + ATP = sn-glycerol 3-phosphate + ADP + H(+). It functions in the pathway polyol metabolism; glycerol degradation via glycerol kinase pathway; sn-glycerol 3-phosphate from glycerol: step 1/1. Its activity is regulated as follows. Inhibited by fructose 1,6-bisphosphate (FBP). Functionally, key enzyme in the regulation of glycerol uptake and metabolism. Catalyzes the phosphorylation of glycerol to yield sn-glycerol 3-phosphate. This is Glycerol kinase from Paraburkholderia xenovorans (strain LB400).